Consider the following 267-residue polypeptide: uncharacterized protein (267 aa).

Positions 72–267 (LTENNNNNNT…EEKKKKKKKK (196 aa)) are disordered. Residues 122–145 (DSVSSSTTTTIITNNKKINNNNNN) are compositionally biased toward low complexity. A compositionally biased stretch (basic and acidic residues) spans 159 to 175 (ENEKSVQKSKKEKESPK). A compositionally biased stretch (low complexity) spans 194-218 (SESSSSSSSSSSSESSSSESESSSS).

This is an uncharacterized protein from Dictyostelium discoideum (Social amoeba).